Consider the following 338-residue polypeptide: Probable dual-specificity RNA methyltransferase RlmN (338 aa).

Glu89 serves as the catalytic Proton acceptor. Residues His95–Asp325 enclose the Radical SAM core domain. An intrachain disulfide couples Cys102 to Cys330. Residues Cys109, Cys113, and Cys116 each coordinate [4Fe-4S] cluster. Residues Gly156–Glu157, Ser188, Ser211–His213, and Asn287 contribute to the S-adenosyl-L-methionine site. Cys330 serves as the catalytic S-methylcysteine intermediate.

This sequence belongs to the radical SAM superfamily. RlmN family. [4Fe-4S] cluster is required as a cofactor.

It is found in the cytoplasm. It catalyses the reaction adenosine(2503) in 23S rRNA + 2 reduced [2Fe-2S]-[ferredoxin] + 2 S-adenosyl-L-methionine = 2-methyladenosine(2503) in 23S rRNA + 5'-deoxyadenosine + L-methionine + 2 oxidized [2Fe-2S]-[ferredoxin] + S-adenosyl-L-homocysteine. The enzyme catalyses adenosine(37) in tRNA + 2 reduced [2Fe-2S]-[ferredoxin] + 2 S-adenosyl-L-methionine = 2-methyladenosine(37) in tRNA + 5'-deoxyadenosine + L-methionine + 2 oxidized [2Fe-2S]-[ferredoxin] + S-adenosyl-L-homocysteine. Its function is as follows. Specifically methylates position 2 of adenine 2503 in 23S rRNA and position 2 of adenine 37 in tRNAs. In Acholeplasma laidlawii (strain PG-8A), this protein is Probable dual-specificity RNA methyltransferase RlmN.